The chain runs to 21 residues: Fibrinogen beta chain (21 aa).

Position 1 is a pyrrolidone carboxylic acid (Gln1). A compositionally biased stretch (acidic residues) spans 1-11; the sequence is QFPTDYDEGED. Residues 1–21 are disordered; that stretch reads QFPTDYDEGEDDRPKSGLGAR. An O-linked (GalNAc...) threonine glycan is attached at Thr4. Tyr6 carries the sulfotyrosine modification.

Heterohexamer; disulfide linked. Contains 2 sets of 3 non-identical chains (alpha, beta and gamma). The 2 heterotrimers are in head to head conformation with the N-termini in a small central domain. In terms of processing, conversion of fibrinogen to fibrin is triggered by thrombin, which cleaves fibrinopeptides A and B from alpha and beta chains, and thus exposes the N-terminal polymerization sites responsible for the formation of the soft clot.

It is found in the secreted. Its function is as follows. Cleaved by the protease thrombin to yield monomers which, together with fibrinogen alpha (FGA) and fibrinogen gamma (FGG), polymerize to form an insoluble fibrin matrix. Fibrin has a major function in hemostasis as one of the primary components of blood clots. In addition, functions during the early stages of wound repair to stabilize the lesion and guide cell migration during re-epithelialization. Was originally thought to be essential for platelet aggregation, based on in vitro studies using anticoagulated blood. However subsequent studies have shown that it is not absolutely required for thrombus formation in vivo. Enhances expression of SELP in activated platelets. Maternal fibrinogen is essential for successful pregnancy. Fibrin deposition is also associated with infection, where it protects against IFNG-mediated hemorrhage. May also facilitate the antibacterial immune response via both innate and T-cell mediated pathways. The polypeptide is Fibrinogen beta chain (FGB) (Syncerus caffer (African buffalo)).